The following is a 159-amino-acid chain: Large ribosomal subunit protein mL50 (159 aa).

Belongs to the mitochondrion-specific ribosomal protein mL50 family. Component of the mitochondrial ribosome large subunit (39S) which comprises a 16S rRNA and about 50 distinct proteins.

The protein localises to the mitochondrion. The protein is Large ribosomal subunit protein mL50 (Mrpl50) of Mus musculus (Mouse).